The following is a 545-amino-acid chain: Glucose-6-phosphate isomerase (545 aa).

Glu-351 serves as the catalytic Proton donor. Catalysis depends on residues His-382 and Lys-510.

The protein belongs to the GPI family.

The protein resides in the cytoplasm. It catalyses the reaction alpha-D-glucose 6-phosphate = beta-D-fructose 6-phosphate. It participates in carbohydrate biosynthesis; gluconeogenesis. The protein operates within carbohydrate degradation; glycolysis; D-glyceraldehyde 3-phosphate and glycerone phosphate from D-glucose: step 2/4. Catalyzes the reversible isomerization of glucose-6-phosphate to fructose-6-phosphate. The protein is Glucose-6-phosphate isomerase of Shewanella amazonensis (strain ATCC BAA-1098 / SB2B).